Here is a 343-residue protein sequence, read N- to C-terminus: Phenylalanine--tRNA ligase alpha subunit (343 aa).

E256 contributes to the Mg(2+) binding site.

It belongs to the class-II aminoacyl-tRNA synthetase family. Phe-tRNA synthetase alpha subunit type 1 subfamily. Tetramer of two alpha and two beta subunits. The cofactor is Mg(2+).

It is found in the cytoplasm. It catalyses the reaction tRNA(Phe) + L-phenylalanine + ATP = L-phenylalanyl-tRNA(Phe) + AMP + diphosphate + H(+). In Prosthecochloris aestuarii (strain DSM 271 / SK 413), this protein is Phenylalanine--tRNA ligase alpha subunit.